We begin with the raw amino-acid sequence, 24 residues long: Large ribosomal subunit protein uL30 (24 aa).

Belongs to the universal ribosomal protein uL30 family. Part of the 50S ribosomal subunit.

The protein is Large ribosomal subunit protein uL30 (rpmD) of Ectopseudomonas mendocina (Pseudomonas mendocina).